The sequence spans 29 residues: Brevinin-2Rd (29 aa).

An intrachain disulfide couples cysteine 23 to cysteine 29.

As to expression, expressed by the skin glands.

The protein resides in the secreted. Its function is as follows. Antimicrobial peptide. The chain is Brevinin-2Rd from Pelophylax ridibundus (Marsh frog).